The primary structure comprises 206 residues: FMN-dependent NADH:quinone oxidoreductase (206 aa).

Residues Ser-9, 15 to 17, and 139 to 142 contribute to the FMN site; these read SVS and SRGG.

Belongs to the azoreductase type 1 family. Homodimer. Requires FMN as cofactor.

The enzyme catalyses 2 a quinone + NADH + H(+) = 2 a 1,4-benzosemiquinone + NAD(+). The catalysed reaction is N,N-dimethyl-1,4-phenylenediamine + anthranilate + 2 NAD(+) = 2-(4-dimethylaminophenyl)diazenylbenzoate + 2 NADH + 2 H(+). Quinone reductase that provides resistance to thiol-specific stress caused by electrophilic quinones. Its function is as follows. Also exhibits azoreductase activity. Catalyzes the reductive cleavage of the azo bond in aromatic azo compounds to the corresponding amines. This chain is FMN-dependent NADH:quinone oxidoreductase, found in Cupriavidus necator (strain ATCC 17699 / DSM 428 / KCTC 22496 / NCIMB 10442 / H16 / Stanier 337) (Ralstonia eutropha).